The sequence spans 573 residues: Phosphoenolpyruvate-protein phosphotransferase (573 aa).

His190 functions as the Tele-phosphohistidine intermediate in the catalytic mechanism. 2 residues coordinate phosphoenolpyruvate: Arg297 and Arg334. Positions 433 and 457 each coordinate Mg(2+). Residues 456 to 457 and Arg467 contribute to the phosphoenolpyruvate site; that span reads ND. Residue Cys504 is the Proton donor of the active site.

This sequence belongs to the PEP-utilizing enzyme family. Homodimer. The cofactor is Mg(2+).

It localises to the cytoplasm. The catalysed reaction is L-histidyl-[protein] + phosphoenolpyruvate = N(pros)-phospho-L-histidyl-[protein] + pyruvate. General (non sugar-specific) component of the phosphoenolpyruvate-dependent sugar phosphotransferase system (sugar PTS). This major carbohydrate active-transport system catalyzes the phosphorylation of incoming sugar substrates concomitantly with their translocation across the cell membrane. Enzyme I transfers the phosphoryl group from phosphoenolpyruvate (PEP) to the phosphoryl carrier protein (HPr). In Borreliella burgdorferi (strain ATCC 35210 / DSM 4680 / CIP 102532 / B31) (Borrelia burgdorferi), this protein is Phosphoenolpyruvate-protein phosphotransferase (ptsI).